The primary structure comprises 298 residues: Large ribosomal subunit protein uL18 (298 aa).

The protein belongs to the universal ribosomal protein uL18 family. In terms of assembly, component of the large ribosomal subunit. Mature ribosomes consist of a small (40S) and a large (60S) subunit. The 40S subunit contains about 32 different proteins and 1 molecule of RNA (18S). The 60S subunit contains 45 different proteins and 3 molecules of RNA (25S, 5.8S and 5S).

The protein localises to the cytoplasm. Functionally, component of the ribosome, a large ribonucleoprotein complex responsible for the synthesis of proteins in the cell. The small ribosomal subunit (SSU) binds messenger RNAs (mRNAs) and translates the encoded message by selecting cognate aminoacyl-transfer RNA (tRNA) molecules. The large subunit (LSU) contains the ribosomal catalytic site termed the peptidyl transferase center (PTC), which catalyzes the formation of peptide bonds, thereby polymerizing the amino acids delivered by tRNAs into a polypeptide chain. The nascent polypeptides leave the ribosome through a tunnel in the LSU and interact with protein factors that function in enzymatic processing, targeting, and the membrane insertion of nascent chains at the exit of the ribosomal tunnel. This Candida albicans (strain SC5314 / ATCC MYA-2876) (Yeast) protein is Large ribosomal subunit protein uL18.